A 159-amino-acid polypeptide reads, in one-letter code: Endoribonuclease YbeY (159 aa).

Residues His125, His129, and His135 each coordinate Zn(2+).

The protein belongs to the endoribonuclease YbeY family. It depends on Zn(2+) as a cofactor.

The protein localises to the cytoplasm. Its function is as follows. Single strand-specific metallo-endoribonuclease involved in late-stage 70S ribosome quality control and in maturation of the 3' terminus of the 16S rRNA. This chain is Endoribonuclease YbeY, found in Lactiplantibacillus plantarum (strain ATCC BAA-793 / NCIMB 8826 / WCFS1) (Lactobacillus plantarum).